We begin with the raw amino-acid sequence, 134 residues long: Phosphoribosyl-AMP cyclohydrolase (134 aa).

Asp80 is a Mg(2+) binding site. Cys81 contributes to the Zn(2+) binding site. Positions 82 and 84 each coordinate Mg(2+). 2 residues coordinate Zn(2+): Cys98 and Cys105.

It belongs to the PRA-CH family. Homodimer. Requires Mg(2+) as cofactor. It depends on Zn(2+) as a cofactor.

The protein localises to the cytoplasm. The catalysed reaction is 1-(5-phospho-beta-D-ribosyl)-5'-AMP + H2O = 1-(5-phospho-beta-D-ribosyl)-5-[(5-phospho-beta-D-ribosylamino)methylideneamino]imidazole-4-carboxamide. It functions in the pathway amino-acid biosynthesis; L-histidine biosynthesis; L-histidine from 5-phospho-alpha-D-ribose 1-diphosphate: step 3/9. In terms of biological role, catalyzes the hydrolysis of the adenine ring of phosphoribosyl-AMP. In Janthinobacterium sp. (strain Marseille) (Minibacterium massiliensis), this protein is Phosphoribosyl-AMP cyclohydrolase.